The following is a 172-amino-acid chain: Molybdopterin synthase catalytic subunit (172 aa).

Position 20 is a phosphoserine (S20). Residues 127–128 (HR), K143, and 150–152 (KKE) contribute to the substrate site.

It belongs to the MoaE family. MOCS2B subfamily. In terms of assembly, heterotetramer; composed of 2 small (MOCS2A) and 2 large (MOCS2B) subunits.

It is found in the cytoplasm. It localises to the cytosol. The catalysed reaction is 2 [molybdopterin-synthase sulfur-carrier protein]-C-terminal-Gly-aminoethanethioate + cyclic pyranopterin phosphate + H2O = molybdopterin + 2 [molybdopterin-synthase sulfur-carrier protein]-C-terminal Gly-Gly + 2 H(+). It functions in the pathway cofactor biosynthesis; molybdopterin biosynthesis. In terms of biological role, catalytic subunit of the molybdopterin synthase complex, a complex that catalyzes the conversion of precursor Z into molybdopterin. Acts by mediating the incorporation of 2 sulfur atoms from thiocarboxylated MOCS2A into precursor Z to generate a dithiolene group. This Pongo abelii (Sumatran orangutan) protein is Molybdopterin synthase catalytic subunit.